The primary structure comprises 488 residues: Glutamyl-tRNA(Gln) amidotransferase subunit A (488 aa).

Catalysis depends on charge relay system residues lysine 77 and serine 152. Serine 176 serves as the catalytic Acyl-ester intermediate.

The protein belongs to the amidase family. GatA subfamily. As to quaternary structure, heterotrimer of A, B and C subunits.

It catalyses the reaction L-glutamyl-tRNA(Gln) + L-glutamine + ATP + H2O = L-glutaminyl-tRNA(Gln) + L-glutamate + ADP + phosphate + H(+). Allows the formation of correctly charged Gln-tRNA(Gln) through the transamidation of misacylated Glu-tRNA(Gln) in organisms which lack glutaminyl-tRNA synthetase. The reaction takes place in the presence of glutamine and ATP through an activated gamma-phospho-Glu-tRNA(Gln). This chain is Glutamyl-tRNA(Gln) amidotransferase subunit A, found in Streptococcus pyogenes serotype M49 (strain NZ131).